Consider the following 1040-residue polypeptide: Multidrug resistance protein MdtB (1040 aa).

12 consecutive transmembrane segments (helical) span residues 25–45 (LLMA…PVAA), 347–367 (LMLA…NIPA), 369–389 (IIPG…MVFL), 396–416 (LTLM…IVVI), 440–460 (IGFT…PLLF), 472–492 (FAVT…TLTP), 537–557 (WLTL…WIVI), 863–883 (LGST…VLGV), 888–908 (FIHP…ALLA), 910–930 (IIAG…LIGI), 968–988 (ILMT…STGV), and 998–1018 (IAMV…TPVI).

This sequence belongs to the resistance-nodulation-cell division (RND) (TC 2.A.6) family. MdtB subfamily. Part of a tripartite efflux system composed of MdtA, MdtB and MdtC. MdtB forms a heteromultimer with MdtC.

It localises to the cell inner membrane. In Salmonella paratyphi B (strain ATCC BAA-1250 / SPB7), this protein is Multidrug resistance protein MdtB.